The following is a 303-amino-acid chain: Glycine--tRNA ligase alpha subunit (303 aa).

The protein belongs to the class-II aminoacyl-tRNA synthetase family. In terms of assembly, tetramer of two alpha and two beta subunits.

It localises to the cytoplasm. It catalyses the reaction tRNA(Gly) + glycine + ATP = glycyl-tRNA(Gly) + AMP + diphosphate. This is Glycine--tRNA ligase alpha subunit from Erwinia tasmaniensis (strain DSM 17950 / CFBP 7177 / CIP 109463 / NCPPB 4357 / Et1/99).